The sequence spans 271 residues: Mediator of RNA polymerase II transcription subunit 18 (271 aa).

The segment at 89 to 119 (FGGNPSSSGDPDVSMSGLEEKPSSSSSSYSY) is disordered.

This sequence belongs to the Mediator complex subunit 18 family. As to quaternary structure, component of the Mediator complex.

The protein resides in the nucleus. Its function is as follows. Component of the Mediator complex, a coactivator involved in the regulated transcription of nearly all RNA polymerase II-dependent genes. Mediator functions as a bridge to convey information from gene-specific regulatory proteins to the basal RNA polymerase II transcription machinery. Mediator is recruited to promoters by direct interactions with regulatory proteins and serves as a scaffold for the assembly of a functional preinitiation complex with RNA polymerase II and the general transcription factors. In Aspergillus niger (strain ATCC MYA-4892 / CBS 513.88 / FGSC A1513), this protein is Mediator of RNA polymerase II transcription subunit 18 (srb5).